Here is a 263-residue protein sequence, read N- to C-terminus: Glutathione S-transferase F8, chloroplastic (263 aa).

A chloroplast-targeting transit peptide spans 1–49 (MGAIQARLPLFLSPPSIKHHTFLHSSSSNSNFKIRSNKSSSSSSSSIIM). The region spanning 50-131 (ASIKVHGVPM…YLAEEYSEKG (82 aa)) is the GST N-terminal domain. Glutathione-binding positions include 60-61 (ST), 89-90 (HK), 102-103 (QI), and 115-116 (ES). One can recognise a GST C-terminal domain in the interval 139-263 (CKKVKATTNV…WAKVIDLQKQ (125 aa)). The residue at position 177 (T177) is a Phosphothreonine.

Belongs to the GST superfamily. Phi family. In terms of tissue distribution, isoform 1 is predominantly expressed in leaves and isoform 2 in roots.

The protein resides in the plastid. The protein localises to the chloroplast. It is found in the cytoplasm. Its subcellular location is the cytosol. The enzyme catalyses RX + glutathione = an S-substituted glutathione + a halide anion + H(+). In vitro, possesses glutathione S-transferase activity toward 1-chloro-2,4-dinitrobenzene (CDNB) and glutathione peroxidase activity toward cumene hydroperoxide and linoleic acid-13-hydroperoxide. May be involved in the conjugation of reduced glutathione to a wide number of exogenous and endogenous hydrophobic electrophiles and have a detoxification role against certain herbicides. The polypeptide is Glutathione S-transferase F8, chloroplastic (GSTF8) (Arabidopsis thaliana (Mouse-ear cress)).